The following is a 482-amino-acid chain: Anaerobic nitric oxide reductase flavorubredoxin (482 aa).

Residues L30–I210 are zinc metallo-hydrolase. The Fe cation site is built by H79, E81, D83, H147, D166, and H227. A Flavodoxin-like domain is found at I254 to A393. Residues T260–N264 and A342–L369 each bind FMN. Residues G426 to L477 enclose the Rubredoxin-like domain. 4 residues coordinate Fe cation: C431, C434, C464, and C467.

The protein in the N-terminal section; belongs to the zinc metallo-hydrolase group 3 family. In terms of assembly, homotetramer. Requires Fe cation as cofactor. FMN serves as cofactor.

Its subcellular location is the cytoplasm. It participates in nitrogen metabolism; nitric oxide reduction. In terms of biological role, anaerobic nitric oxide reductase; uses NADH to detoxify nitric oxide (NO), protecting several 4Fe-4S NO-sensitive enzymes. Has at least 2 reductase partners, only one of which (NorW, flavorubredoxin reductase) has been identified. NO probably binds to the di-iron center; electrons enter from the NorW at rubredoxin and are transferred sequentially to the FMN center and the di-iron center. Also able to function as an aerobic oxygen reductase. The chain is Anaerobic nitric oxide reductase flavorubredoxin from Citrobacter koseri (strain ATCC BAA-895 / CDC 4225-83 / SGSC4696).